We begin with the raw amino-acid sequence, 523 residues long: Cytoplasmic dynein 1 light intermediate chain 1 (523 aa).

A disordered region spans residues 1-25; it reads MAAVGRVGSFGSSPPGLSSTYTGGP. Low complexity predominate over residues 9 to 19; the sequence is SFGSSPPGLSS. 74–81 is an ATP binding site; it reads GEDGAGKT. Ser-207 is modified (phosphoserine). A Phosphothreonine modification is found at Thr-213. Disordered regions lie at residues 387–434 and 456–523; these read PPTA…DPNM and TGSP…GEAS. 2 positions are modified to phosphoserine: Ser-398 and Ser-405. Thr-408 carries the phosphothreonine modification. Ser-412, Ser-419, Ser-421, and Ser-427 each carry phosphoserine. The segment covering 412-421 has biased composition (low complexity); it reads SVSSNVASVS. A compositionally biased stretch (gly residues) spans 458 to 478; that stretch reads SPGGPGVSGGSPAGGAGGGSS. Ser-487 bears the Phosphoserine mark. Residues 493–503 are compositionally biased toward basic and acidic residues; that stretch reads LDVHAELDRIT. Low complexity predominate over residues 506-523; sequence PVTVSPTTPTSPTEGEAS. Ser-510 is subject to Phosphoserine. Residues Thr-512, Thr-513, and Thr-515 each carry the phosphothreonine modification. At Ser-516 the chain carries Phosphoserine.

It belongs to the dynein light intermediate chain family. In terms of assembly, homodimer. The cytoplasmic dynein 1 complex consists of two catalytic heavy chains (HCs) and a number of non-catalytic subunits presented by intermediate chains (ICs), light intermediate chains (LICs) and light chains (LCs); the composition seems to vary in respect to the IC, LIC and LC composition. The heavy chain homodimer serves as a scaffold for the probable homodimeric assembly of the respective non-catalytic subunits. The ICs and LICs bind directly to the HC dimer and the LCs assemble on the IC dimer. Self-associates. Interacts with DYNC1H1; DYNC1LI1 and DYNC1LI2 bind mutually exclusive to DYNC1H1. Interacts with PCNT. Forms a complex with RAB11FIP3 and RAB11A1; the interaction between DYNC1LI1 and RAB11FIP3 is direct and induces DYNC1LI1 localization onto endosomal membrane; the complex regulates endocytic trafficking. Interacts with RUFY3. (Microbial infection) Interacts with human adenovirus 5 hexon protein; this interaction probably allows virus intracellular transport. In terms of processing, phosphorylated during mitosis but not in interphase.

Its subcellular location is the cytoplasm. The protein resides in the chromosome. It is found in the centromere. The protein localises to the kinetochore. It localises to the cytoskeleton. Its subcellular location is the spindle pole. The protein resides in the recycling endosome membrane. Its function is as follows. Acts as one of several non-catalytic accessory components of the cytoplasmic dynein 1 complex that are thought to be involved in linking dynein to cargos and to adapter proteins that regulate dynein function. Cytoplasmic dynein 1 acts as a motor for the intracellular retrograde motility of vesicles and organelles along microtubules. May play a role in binding dynein to membranous organelles or chromosomes. Probably involved in the microtubule-dependent transport of pericentrin. Is required for progress through the spindle assembly checkpoint. The phosphorylated form appears to be involved in the selective removal of MAD1L1 and MAD1L2 but not BUB1B from kinetochores. Forms a functional Rab11/RAB11FIP3/dynein complex onto endosomal membrane that regulates the movement of peripheral sorting endosomes (SE) along microtubule tracks toward the microtubule organizing center/centrosome, generating the endosomal recycling compartment (ERC). This Homo sapiens (Human) protein is Cytoplasmic dynein 1 light intermediate chain 1 (DYNC1LI1).